An 88-amino-acid polypeptide reads, in one-letter code: Small ribosomal subunit protein uS15 (88 aa).

A compositionally biased stretch (basic and acidic residues) spans 1 to 20; it reads MLATEKKQELIDQYKRHEGD. Positions 1–21 are disordered; that stretch reads MLATEKKQELIDQYKRHEGDT.

It belongs to the universal ribosomal protein uS15 family. Part of the 30S ribosomal subunit. Forms a bridge to the 50S subunit in the 70S ribosome, contacting the 23S rRNA.

One of the primary rRNA binding proteins, it binds directly to 16S rRNA where it helps nucleate assembly of the platform of the 30S subunit by binding and bridging several RNA helices of the 16S rRNA. In terms of biological role, forms an intersubunit bridge (bridge B4) with the 23S rRNA of the 50S subunit in the ribosome. The sequence is that of Small ribosomal subunit protein uS15 from Syntrophotalea carbinolica (strain DSM 2380 / NBRC 103641 / GraBd1) (Pelobacter carbinolicus).